The following is a 384-amino-acid chain: Outer membrane protein assembly factor BamC (384 aa).

An N-terminal signal peptide occupies residues Met-1–Gly-23. Residue Cys-24 is the site of N-palmitoyl cysteine attachment. The S-diacylglycerol cysteine moiety is linked to residue Cys-24. 2 disordered regions span residues Leu-47 to Lys-70 and Gln-251 to Leu-273.

Belongs to the BamC family. In terms of assembly, part of the Bam complex.

It is found in the cell outer membrane. Functionally, part of the outer membrane protein assembly complex, which is involved in assembly and insertion of beta-barrel proteins into the outer membrane. This Accumulibacter regalis protein is Outer membrane protein assembly factor BamC.